The following is a 530-amino-acid chain: Histone-arginine methyltransferase CARMER (530 aa).

In terms of domain architecture, SAM-dependent MTase PRMT-type spans 141-450 (ASQYFQFYGY…QSYDVTIDLH (310 aa)). The S-adenosyl-L-methionine site is built by Gln154, Arg163, Gly187, Glu209, Glu238, and Thr266. Arg501 is subject to Asymmetric dimethylarginine; by autocatalysis.

This sequence belongs to the class I-like SAM-binding methyltransferase superfamily. Protein arginine N-methyltransferase family. As to quaternary structure, homodimer. Post-translationally, the dimethylated protein is the major form.

The protein localises to the cytoplasm. The protein resides in the nucleus. It carries out the reaction L-arginyl-[protein] + 2 S-adenosyl-L-methionine = N(omega),N(omega)-dimethyl-L-arginyl-[protein] + 2 S-adenosyl-L-homocysteine + 2 H(+). Functionally, methylates (mono- and asymmetric dimethylation) the guanidino nitrogens of arginyl residues in proteins. May methylate histone H3 at 'Arg-17' and activate transcription via chromatin remodeling. In Drosophila yakuba (Fruit fly), this protein is Histone-arginine methyltransferase CARMER (Art4).